Consider the following 600-residue polypeptide: Methionine--tRNA ligase (600 aa).

A 'HIGH' region motif is present at residues 11–21 (PYANGPRHIGH). Residues Cys-143, Cys-146, Cys-156, and Cys-159 each coordinate Zn(2+). A 'KMSKS' region motif is present at residues 350–354 (QFSSS). Ser-353 is an ATP binding site.

Belongs to the class-I aminoacyl-tRNA synthetase family. MetG type 1 subfamily. In terms of assembly, monomer. It depends on Zn(2+) as a cofactor.

The protein localises to the cytoplasm. It carries out the reaction tRNA(Met) + L-methionine + ATP = L-methionyl-tRNA(Met) + AMP + diphosphate. In terms of biological role, is required not only for elongation of protein synthesis but also for the initiation of all mRNA translation through initiator tRNA(fMet) aminoacylation. This Kineococcus radiotolerans (strain ATCC BAA-149 / DSM 14245 / SRS30216) protein is Methionine--tRNA ligase.